A 119-amino-acid chain; its full sequence is Ribonuclease P protein component (119 aa).

It belongs to the RnpA family. As to quaternary structure, consists of a catalytic RNA component (M1 or rnpB) and a protein subunit.

The enzyme catalyses Endonucleolytic cleavage of RNA, removing 5'-extranucleotides from tRNA precursor.. RNaseP catalyzes the removal of the 5'-leader sequence from pre-tRNA to produce the mature 5'-terminus. It can also cleave other RNA substrates such as 4.5S RNA. The protein component plays an auxiliary but essential role in vivo by binding to the 5'-leader sequence and broadening the substrate specificity of the ribozyme. This chain is Ribonuclease P protein component, found in Shewanella woodyi (strain ATCC 51908 / MS32).